The primary structure comprises 264 residues: Hydroxyethylthiazole kinase (264 aa).

Methionine 40 lines the substrate pocket. Lysine 116 and threonine 161 together coordinate ATP. Glycine 188 contacts substrate.

Belongs to the Thz kinase family. Mg(2+) is required as a cofactor.

It carries out the reaction 5-(2-hydroxyethyl)-4-methylthiazole + ATP = 4-methyl-5-(2-phosphooxyethyl)-thiazole + ADP + H(+). It functions in the pathway cofactor biosynthesis; thiamine diphosphate biosynthesis; 4-methyl-5-(2-phosphoethyl)-thiazole from 5-(2-hydroxyethyl)-4-methylthiazole: step 1/1. Its function is as follows. Catalyzes the phosphorylation of the hydroxyl group of 4-methyl-5-beta-hydroxyethylthiazole (THZ). This is Hydroxyethylthiazole kinase from Staphylococcus carnosus (strain TM300).